A 262-amino-acid chain; its full sequence is Hydroxyethylthiazole kinase (262 aa).

Position 50 (methionine 50) interacts with substrate. ATP is bound by residues arginine 125 and threonine 171. Glycine 198 is a substrate binding site.

This sequence belongs to the Thz kinase family. The cofactor is Mg(2+).

It carries out the reaction 5-(2-hydroxyethyl)-4-methylthiazole + ATP = 4-methyl-5-(2-phosphooxyethyl)-thiazole + ADP + H(+). It functions in the pathway cofactor biosynthesis; thiamine diphosphate biosynthesis; 4-methyl-5-(2-phosphoethyl)-thiazole from 5-(2-hydroxyethyl)-4-methylthiazole: step 1/1. Its function is as follows. Catalyzes the phosphorylation of the hydroxyl group of 4-methyl-5-beta-hydroxyethylthiazole (THZ). The polypeptide is Hydroxyethylthiazole kinase (Escherichia fergusonii (strain ATCC 35469 / DSM 13698 / CCUG 18766 / IAM 14443 / JCM 21226 / LMG 7866 / NBRC 102419 / NCTC 12128 / CDC 0568-73)).